We begin with the raw amino-acid sequence, 581 residues long: MYAASILILHLTWAVATIAANGAGHNGPVASGAGPNGLQCQPIAVSACQGLGYNMTALPNLAGHTNQLEAELQIAKLVPLIESGCSRRARFLLCSSLFPLCTPDVPRPVAACKLLCETVRGECMENAPPELMELWPSFLNCDGLPQPEKHELCMQIPQEVAVPGGSPSGPPTTGSPGVEDHPQTYRFWKSGASPTSDLAGVLCPQNFSGSPFNPEECVPQCQRDAFHTSSQKKTSETLILGLSAVCFVLTLFALVTFWAEPTRFGYPERPVLFLCLCYNLFSVCYLERIVFHNQARMHDVELQGRLMRPGCLLTPPCLASYITTSYLSLCAASWWLIFALCFYLSSHKKWSSEALEKRSGLFHVLAWVPPLAPPIAALLLEKVRPSELTGMCYAPGFVELPALVLLLLGLYFTLRASRSLLSLQQQLQPTLAHHRFGQIRKRFVLFSLLYFAPTTAGVVAALCERYADSVPSCSTPDDCLSPTPLSAWPALVRIFFQLVGGTLTGLWVWSRKTCESYRNRLGASGTPTSSLMNQSKAAGALPKKHLYTSGKSMLPTGGITPLYAGISFHNVPVYNPNQSRV.

A signal peptide spans 1-19 (MYAASILILHLTWAVATIA). Topologically, residues 20-237 (ANGAGHNGPV…TSSQKKTSET (218 aa)) are extracellular. Residues 35–156 (PNGLQCQPIA…PEKHELCMQI (122 aa)) form the FZ domain. 5 disulfides stabilise this stretch: cysteine 40–cysteine 101, cysteine 48–cysteine 94, cysteine 85–cysteine 123, cysteine 112–cysteine 153, and cysteine 116–cysteine 141. Asparagine 54 carries N-linked (GlcNAc...) asparagine glycosylation. Asparagine 206 carries N-linked (GlcNAc...) asparagine glycosylation. A helical membrane pass occupies residues 238 to 258 (LILGLSAVCFVLTLFALVTFW). Over 259–270 (AEPTRFGYPERP) the chain is Cytoplasmic. A helical transmembrane segment spans residues 271-291 (VLFLCLCYNLFSVCYLERIVF). Topologically, residues 292-321 (HNQARMHDVELQGRLMRPGCLLTPPCLASY) are extracellular. A helical transmembrane segment spans residues 322-342 (ITTSYLSLCAASWWLIFALCF). Residues 343–359 (YLSSHKKWSSEALEKRS) are Cytoplasmic-facing. A helical membrane pass occupies residues 360–380 (GLFHVLAWVPPLAPPIAALLL). Over 381-393 (EKVRPSELTGMCY) the chain is Extracellular. The helical transmembrane segment at 394 to 414 (APGFVELPALVLLLLGLYFTL) threads the bilayer. Residues 415–442 (RASRSLLSLQQQLQPTLAHHRFGQIRKR) lie on the Cytoplasmic side of the membrane. A helical membrane pass occupies residues 443 to 463 (FVLFSLLYFAPTTAGVVAALC). Residues 464–488 (ERYADSVPSCSTPDDCLSPTPLSAW) are Extracellular-facing. The helical transmembrane segment at 489 to 509 (PALVRIFFQLVGGTLTGLWVW) threads the bilayer. Residues 510-581 (SRKTCESYRN…PVYNPNQSRV (72 aa)) are Cytoplasmic-facing. Residues 579 to 581 (SRV) carry the PDZ-binding motif.

The protein belongs to the G-protein coupled receptor Fz/Smo family. Wing, leg and eye imaginal disks. In embryos, expressed is seen in brain, proventriculus, Malpighian tubules, anal plate and visceral mesoderm of parasegment 8.

Its subcellular location is the membrane. Its function is as follows. Receptor for Wnt proteins. Most of frizzled receptors are coupled to the beta-catenin canonical signaling pathway, which leads to the activation of disheveled proteins, inhibition of GSK-3 kinase, nuclear accumulation of beta-catenin and activation of Wnt target genes. A second signaling pathway involving PKC and calcium fluxes has been seen for some family members, but it is not yet clear if it represents a distinct pathway or if it can be integrated in the canonical pathway, as PKC seems to be required for Wnt-mediated inactivation of GSK-3 kinase. Both pathways seem to involve interactions with G-proteins. Required to coordinate the cytoskeletons of epidermal cells to produce a parallel array of cuticular hairs and bristles. The chain is Frizzled-3 (fz3) from Drosophila melanogaster (Fruit fly).